Here is a 348-residue protein sequence, read N- to C-terminus: Peroxidase 40 (348 aa).

An N-terminal signal peptide occupies residues 1-21; it reads MKNLFNLFLMFFFAMPILSLS. Asn-26 carries an N-linked (GlcNAc...) asparagine glycan. 4 disulfides stabilise this stretch: Cys-59/Cys-139, Cys-92/Cys-97, Cys-145/Cys-344, and Cys-224/Cys-256. His-90 functions as the Proton acceptor in the catalytic mechanism. The Ca(2+) site is built by Asp-91, Val-94, Gly-96, Asp-98, and Ser-100. The segment at 170-189 is disordered; that stretch reads GRKDSRTASKQAATNGLPSP. Over residues 177 to 189 the composition is skewed to polar residues; sequence ASKQAATNGLPSP. Pro-187 contributes to the substrate binding site. The N-linked (GlcNAc...) asparagine glycan is linked to Asn-190. His-217 contributes to the heme b binding site. Thr-218 serves as a coordination point for Ca(2+). The Ca(2+) site is built by Asp-269, Thr-272, and Asp-277.

Belongs to the peroxidase family. Classical plant (class III) peroxidase subfamily. Heme b serves as cofactor. The cofactor is Ca(2+).

Its subcellular location is the secreted. The catalysed reaction is 2 a phenolic donor + H2O2 = 2 a phenolic radical donor + 2 H2O. Its function is as follows. Removal of H(2)O(2), oxidation of toxic reductants, biosynthesis and degradation of lignin, suberization, auxin catabolism, response to environmental stresses such as wounding, pathogen attack and oxidative stress. These functions might be dependent on each isozyme/isoform in each plant tissue. The sequence is that of Peroxidase 40 (PER40) from Arabidopsis thaliana (Mouse-ear cress).